The following is a 212-amino-acid chain: Endonuclease III (212 aa).

Positions 108 to 127 constitute a HhH domain; the sequence is FKELVKLPGVGRKTANVVLN. [4Fe-4S] cluster-binding residues include Cys-187, Cys-194, Cys-197, and Cys-203.

It belongs to the Nth/MutY family. It depends on [4Fe-4S] cluster as a cofactor.

The enzyme catalyses 2'-deoxyribonucleotide-(2'-deoxyribose 5'-phosphate)-2'-deoxyribonucleotide-DNA = a 3'-end 2'-deoxyribonucleotide-(2,3-dehydro-2,3-deoxyribose 5'-phosphate)-DNA + a 5'-end 5'-phospho-2'-deoxyribonucleoside-DNA + H(+). Its function is as follows. DNA repair enzyme that has both DNA N-glycosylase activity and AP-lyase activity. The DNA N-glycosylase activity releases various damaged pyrimidines from DNA by cleaving the N-glycosidic bond, leaving an AP (apurinic/apyrimidinic) site. The AP-lyase activity cleaves the phosphodiester bond 3' to the AP site by a beta-elimination, leaving a 3'-terminal unsaturated sugar and a product with a terminal 5'-phosphate. The sequence is that of Endonuclease III from Rickettsia prowazekii (strain Madrid E).